The primary structure comprises 305 residues: GTP cyclohydrolase FolE2 (305 aa).

It belongs to the GTP cyclohydrolase IV family.

It catalyses the reaction GTP + H2O = 7,8-dihydroneopterin 3'-triphosphate + formate + H(+). The protein operates within cofactor biosynthesis; 7,8-dihydroneopterin triphosphate biosynthesis; 7,8-dihydroneopterin triphosphate from GTP: step 1/1. Converts GTP to 7,8-dihydroneopterin triphosphate. The sequence is that of GTP cyclohydrolase FolE2 from Xanthomonas euvesicatoria pv. vesicatoria (strain 85-10) (Xanthomonas campestris pv. vesicatoria).